We begin with the raw amino-acid sequence, 208 residues long: Uracil phosphoribosyltransferase (208 aa).

Residues R78, R103, and 130 to 138 (DPMLATGGS) contribute to the 5-phospho-alpha-D-ribose 1-diphosphate site. Uracil-binding positions include I193 and 198-200 (GDA). 5-phospho-alpha-D-ribose 1-diphosphate is bound at residue D199.

Belongs to the UPRTase family. The cofactor is Mg(2+).

The enzyme catalyses UMP + diphosphate = 5-phospho-alpha-D-ribose 1-diphosphate + uracil. It functions in the pathway pyrimidine metabolism; UMP biosynthesis via salvage pathway; UMP from uracil: step 1/1. Allosterically activated by GTP. In terms of biological role, catalyzes the conversion of uracil and 5-phospho-alpha-D-ribose 1-diphosphate (PRPP) to UMP and diphosphate. This chain is Uracil phosphoribosyltransferase, found in Wolinella succinogenes (strain ATCC 29543 / DSM 1740 / CCUG 13145 / JCM 31913 / LMG 7466 / NCTC 11488 / FDC 602W) (Vibrio succinogenes).